Consider the following 226-residue polypeptide: Protein GrpE (226 aa).

Disordered stretches follow at residues 1 to 24 and 205 to 226; these read MADEKNKPENPDLDQRDINNPRDR and GVSKGGPKVSAENGASTSEDNA. Residues 217 to 226 show a composition bias toward polar residues; sequence NGASTSEDNA.

It belongs to the GrpE family. As to quaternary structure, homodimer.

The protein resides in the cytoplasm. Participates actively in the response to hyperosmotic and heat shock by preventing the aggregation of stress-denatured proteins, in association with DnaK and GrpE. It is the nucleotide exchange factor for DnaK and may function as a thermosensor. Unfolded proteins bind initially to DnaJ; upon interaction with the DnaJ-bound protein, DnaK hydrolyzes its bound ATP, resulting in the formation of a stable complex. GrpE releases ADP from DnaK; ATP binding to DnaK triggers the release of the substrate protein, thus completing the reaction cycle. Several rounds of ATP-dependent interactions between DnaJ, DnaK and GrpE are required for fully efficient folding. This chain is Protein GrpE, found in Brucella melitensis biotype 1 (strain ATCC 23456 / CCUG 17765 / NCTC 10094 / 16M).